Consider the following 205-residue polypeptide: High frequency lysogenization protein HflD homolog (205 aa).

This sequence belongs to the HflD family.

The protein resides in the cytoplasm. It is found in the cell inner membrane. The sequence is that of High frequency lysogenization protein HflD homolog from Shewanella pealeana (strain ATCC 700345 / ANG-SQ1).